The chain runs to 306 residues: MWFKNLLTYRLTQEVPFEPEALEAALASKPARPCASQELTTYGFVAPFGKGEDAPLVHVSGEYLLIAARKEERILPSSVVNDAVKEKVEEIETEQMRKVYKKERDQIKDEIIQAFLPRAFIRRSMIFAAIAPRLGVILVNSASAKRAEDLLSTLREVMGSLPVRPATVKIAPVATMTDWVKSQQAAEGFYVLDECELRDTAEDGGIVRCKRQDLTGEEIQLHLSTGKVVTQLALAWQDKLSFILDDKMVIKRLKFEELLQEQAEQDGGDEAAQQFDASFQLMMMTFAEFLPVLFEALGGEEIPQGV.

It belongs to the RdgC family.

Its subcellular location is the cytoplasm. The protein resides in the nucleoid. In terms of biological role, may be involved in recombination. In Pseudomonas putida (strain ATCC 47054 / DSM 6125 / CFBP 8728 / NCIMB 11950 / KT2440), this protein is Recombination-associated protein RdgC.